Reading from the N-terminus, the 557-residue chain is Probable tRNA-splicing endonuclease subunit tsp-5 (557 aa).

5 disordered regions span residues 1-36 (MPLD…MMDE), 131-152 (KLTK…DRKL), 225-252 (SVPA…EDDD), 370-403 (PSST…SDSP), and 514-557 (SGGP…GRGN). Over residues 131-140 (KLTKRGKEGA) the composition is skewed to basic and acidic residues. Residues 370–381 (PSSTSSSASPTA) show a composition bias toward low complexity. 2 stretches are compositionally biased toward gly residues: residues 517–527 (PRRGGGGGGKK) and 538–549 (GRGGGRGGGRGG).

This sequence belongs to the SEN54 family. As to quaternary structure, tRNA splicing endonuclease is a heterotetramer composed of tsp-2/sen2, tsp-1/sen15, tsp-4/sen34 and tsp-5/sen54. Interacts directly with tsp-2/sen2.

Functionally, non-catalytic subunit of the tRNA-splicing endonuclease complex, a complex responsible for identification and cleavage of the splice sites in pre-tRNA. It cleaves pre-tRNA at the 5' and 3' splice sites to release the intron. The products are an intron and two tRNA half-molecules bearing 2',3' cyclic phosphate and 5'-OH termini. There are no conserved sequences at the splice sites, but the intron is invariably located at the same site in the gene, placing the splice sites an invariant distance from the constant structural features of the tRNA body. May be required to embody the molecular ruler of the complex. The polypeptide is Probable tRNA-splicing endonuclease subunit tsp-5 (tsp-5) (Neurospora crassa (strain ATCC 24698 / 74-OR23-1A / CBS 708.71 / DSM 1257 / FGSC 987)).